Consider the following 107-residue polypeptide: Guanine nucleotide-binding protein G(I)/G(S)/G(O) subunit gamma-14 (107 aa).

The G protein gamma domain occupies 69–107 (KMAADLLKFCTEQAKNDPFLVGIPAATNSFKEKKPYAIL).

This sequence belongs to the G protein gamma family. As to quaternary structure, g proteins are composed of 3 units; alpha, beta and gamma.

Its subcellular location is the cell membrane. Its function is as follows. Guanine nucleotide-binding proteins (G proteins) are involved as a modulator or transducer in various transmembrane signaling systems. The beta and gamma chains are required for the GTPase activity, for replacement of GDP by GTP, and for G protein-effector interaction. This chain is Guanine nucleotide-binding protein G(I)/G(S)/G(O) subunit gamma-14, found in Homo sapiens (Human).